Reading from the N-terminus, the 906-residue chain is UPF0182 protein CA_C0010 (906 aa).

The next 7 helical transmembrane spans lie at 7–29 (IVTI…DFII), 47–69 (LAAI…WFYY), 96–118 (VAIV…VYWY), 153–175 (LYGV…YIVL), 208–230 (FAII…SFNL), 250–272 (LVFY…TSII), and 279–301 (IFVS…EIVQ). Positions 842–862 (NSSNNQSETRTETGGTSTDSS) are enriched in low complexity. The tract at residues 842 to 875 (NSSNNQSETRTETGGTSTDSSNNKDKLKQAQDLY) is disordered.

Belongs to the UPF0182 family.

The protein resides in the cell membrane. This is UPF0182 protein CA_C0010 from Clostridium acetobutylicum (strain ATCC 824 / DSM 792 / JCM 1419 / IAM 19013 / LMG 5710 / NBRC 13948 / NRRL B-527 / VKM B-1787 / 2291 / W).